The chain runs to 970 residues: GEM-interacting protein (970 aa).

Position 19 is a phosphoserine (serine 19). 3 disordered regions span residues 44 to 76, 224 to 263, and 377 to 478; these read PLLS…EGPV, SEDL…AQAK, and PLDI…ENGL. Polar residues predominate over residues 56 to 65; that stretch reads PTATVTNEAS. Residues serine 71, serine 231, serine 234, serine 243, serine 437, and serine 441 each carry the phosphoserine modification. In terms of domain architecture, F-BAR spans 81–344; sequence EELDLRLIRT…CCAPFEPGQR (264 aa). Residues 231 to 246 are compositionally biased toward polar residues; sequence SQGSPEDSAPQASPGP. Positions 459–472 are enriched in acidic residues; that stretch reads SSDDFEERDPDLGD. A Phorbol-ester/DAG-type zinc finger spans residues 493–537; that stretch reads THQLRRLRGPAKCRECEAFMVSGTECEECFLTCHKRCLETLLILC. A Rho-GAP domain is found at 554–757; sequence LQLPRDFPEE…FLIVHYEQIF (204 aa). Threonine 660 bears the Phosphothreonine mark. Residues 762 to 878 form a disordered region; that stretch reads LPQATEPPPQ…PVKYPRGGVR (117 aa). A compositionally biased stretch (pro residues) spans 766–778; it reads TEPPPQDSSPAPG. Over residues 815-830 the composition is skewed to polar residues; the sequence is EQHPTATPTEIPTPQS. The segment covering 831–844 has biased composition (basic and acidic residues); it reads DQREDVAEDTKDGG. The segment covering 847–863 has biased composition (polar residues); that stretch reads VSSQGPEDSLLGTQSRG. 5 positions are modified to phosphoserine: serine 885, serine 907, serine 914, serine 919, and serine 923. Positions 897–932 are disordered; the sequence is ETPITSVPRGSLRGRGPSPAAASPEGSPLRRTPLPK. The segment covering 910–923 has biased composition (low complexity); sequence GRGPSPAAASPEGS.

As to quaternary structure, interacts with GEM through its N-terminal.

Stimulates, in vitro and in vivo, the GTPase activity of RhoA. This chain is GEM-interacting protein (GMIP), found in Homo sapiens (Human).